Here is a 184-residue protein sequence, read N- to C-terminus: Protein Syd (184 aa).

It belongs to the Syd family.

It localises to the cell inner membrane. Interacts with the SecY protein in vivo. May bind preferentially to an uncomplexed state of SecY, thus functioning either as a chelating agent for excess SecY in the cell or as a regulatory factor that negatively controls the translocase function. This Photobacterium profundum (strain SS9) protein is Protein Syd.